We begin with the raw amino-acid sequence, 275 residues long: F420-dependent methylenetetrahydromethanopterin dehydrogenase (275 aa).

It belongs to the MTD family.

The enzyme catalyses 5,10-methylenetetrahydromethanopterin + oxidized coenzyme F420-(gamma-L-Glu)(n) + 2 H(+) = 5,10-methenyl-5,6,7,8-tetrahydromethanopterin + reduced coenzyme F420-(gamma-L-Glu)(n). Its pathway is one-carbon metabolism; methanogenesis from CO(2); 5,10-methylene-5,6,7,8-tetrahydromethanopterin from 5,10-methenyl-5,6,7,8-tetrahydromethanopterin (coenzyme F420 route): step 1/1. Functionally, catalyzes the reversible reduction of methenyl-H(4)MPT(+) to methylene-H(4)MPT. This Methanobrevibacter smithii (strain ATCC 35061 / DSM 861 / OCM 144 / PS) protein is F420-dependent methylenetetrahydromethanopterin dehydrogenase.